A 915-amino-acid polypeptide reads, in one-letter code: Coronin-7 (915 aa).

WD repeat units follow at residues 75 to 115 (CHSD…QALP), 124 to 163 (PEDA…PLTE), 166 to 205 (THGD…EAAQ), and 209 to 253 (AHEN…AALT). The interval 396 to 456 (TSCLAPPAEL…TSPSQRSLQS (61 aa)) is disordered. Composition is skewed to low complexity over residues 399-413 (LAPP…AQPA) and 420-450 (SSTP…TSPS). A phosphoserine mark is found at S453 and S456. Residue K463 forms a Glycyl lysine isopeptide (Lys-Gly) (interchain with G-Cter in ubiquitin) linkage. WD repeat units lie at residues 533–573 (QNGV…LQEV), 583–623 (GHTE…EQLR), 626–665 (GHRD…EPLQ), and 719–759 (DVAP…PFFL). Residues 850-915 (PPGMTPVSQA…FEGVDEDEWD (66 aa)) are disordered. The segment covering 859–869 (APREAPARRAP) has biased composition (low complexity). Positions 874-886 (LEEKSDQQKKEEL) are enriched in basic and acidic residues. S905 is modified (phosphoserine).

This sequence belongs to the WD repeat coronin family. In terms of assembly, interacts with clathrin adapter AP1 complex. This interaction takes place at Golgi membranes and not AP1-positive endosomal membranes. Interacts (when ubiquitinated at Lys-463) with EPS15. In terms of processing, the membrane-associated form is phosphorylated on tyrosine residues. Ubiquitinated via 'Lys-33'-linked ubiquitin chains by the BCR(KLHL20) E3 ubiquitin ligase complex: 'Lys-33'-linked ubiquitination promotes interaction with EPS15 and facilitates actin polymerization at the trans-Golgi network, thereby facilitating post-Golgi trafficking. Deubiquitinated by ZRANB1/TRABID.

The protein resides in the golgi apparatus membrane. It localises to the golgi apparatus. It is found in the trans-Golgi network. The protein localises to the cytoplasmic vesicle. Its subcellular location is the cytoplasm. The protein resides in the cytosol. Its function is as follows. F-actin regulator involved in anterograde Golgi to endosome transport: upon ubiquitination via 'Lys-33'-linked ubiquitin chains by the BCR(KLHL20) E3 ubiquitin ligase complex, interacts with EPS15 and localizes to the trans-Golgi network, where it promotes actin polymerization, thereby facilitating post-Golgi trafficking. May play a role in the maintenance of the Golgi apparatus morphology. The protein is Coronin-7 (CORO7) of Bos taurus (Bovine).